A 103-amino-acid chain; its full sequence is MAHYKAADSKREQFRRYLEKSGVLDTLTKVLVALYEEPEKPNSALDFLKHHLGAATPENPEIELLRLELAEMKEKYEAIVEENKKLKTKLAQYEPPQEEKRAE.

This sequence belongs to the AMY1 family. Binds via its C-terminal region to the N-terminal region of MYC. Associates with AKAP1/S-AKAP84. Interacts with MYCBPAP. Interacts with CFAP91.

The protein localises to the cytoplasm. Its subcellular location is the nucleus. Functionally, may control the transcriptional activity of MYC. Stimulates the activation of E box-dependent transcription by MYC. The polypeptide is c-Myc-binding protein (MYCBP) (Bos taurus (Bovine)).